Reading from the N-terminus, the 59-residue chain is UPF0391 membrane protein LPC_1949 (59 aa).

Transmembrane regions (helical) follow at residues 5 to 25 (ALIF…GIAV) and 30 to 50 (IAKI…IMGL).

The protein belongs to the UPF0391 family.

It localises to the cell membrane. This Legionella pneumophila (strain Corby) protein is UPF0391 membrane protein LPC_1949.